We begin with the raw amino-acid sequence, 623 residues long: AM-toxin biosynthesis protein 12-2 (623 aa).

Residues T110 to L129 form a disordered region.

The protein operates within mycotoxin biosynthesis. Its function is as follows. Part of the gene clusters that mediate the biosynthesis of AM-toxins, host-selective toxins (HSTs) causing Alternaria blotch on apple, a worldwide distributed disease. AM-toxins are cyclic depsipeptides containing the 3 residues 2-hydroxy-isovaleric acid (2-HIV), dehydroalanine, L-alanine which are common for all 3 AM-toxins I to III. The fourth precursor is L-alpha-amino-methoxyphenyl-valeric acid (L-Amv) for AM-toxin I, L-alpha-amino-phenyl-valeric acid (L-Apv) for AM-toxin II, and L-alpha-amino-hydroxyphenyl-valeric acid (L-Ahv) for AM-toxin III. AM-toxins have two target sites for affecting susceptible apple cells; they cause invagination of the plasma membrane and electrolyte loss and chloroplast disorganization. The non-ribosomal peptide synthetase AMT1 contains 4 catalytic modules and is responsible for activation of each residue in AM-toxin. The aldo-keto reductase AMT2 catalyzes the conversion of 2-keto-isovaleric acid (2-KIV) to 2-hydroxy-isovaleric acid (2-HIV), one of the precursor residues incorporated by AMT1 during AM-toxin biosynthesis, by reduction of its ketone to an alcohol. The cytochrome P450 monooxygenase AMT3 and the thioesterase AMT4 are also important for AM-toxin production, but their exact function within the AM-toxin biosynthesis are not known yet. Up to 21 proteins (including AMT1 to AMT4) are predicted to be involved in AM-toxin biosynthesis since their expression ishighly up-regulated in AM-toxin-producing cultures. The polypeptide is AM-toxin biosynthesis protein 12-2 (Alternaria alternata (Alternaria rot fungus)).